A 459-amino-acid chain; its full sequence is Zinc finger protein 213 (459 aa).

Positions 45–126 constitute an SCAN box domain; it reads RQRFRQFCYG…VALVEDLQKQ (82 aa). The disordered stretch occupies residues 128–188; it reads VKAWRQDVPS…ALLKEGRPGE (61 aa). Residues 202 to 292 form the KRAB domain; that stretch reads VALGDIPFYF…ENRPRAALGP (91 aa). 5 consecutive C2H2-type zinc fingers follow at residues 317–339, 345–367, 373–395, 401–423, and 429–451; these read HSCGQCGKRFRWGSDLARHQRTH, HKCPECDKSFRSSSDLVRHQGVH, FSCSECGKSFSRSAYLADHQRIH, FGCSDCGKSFSLRSYLLDHRRVH, and FGCGECDKSFKQRAHLIAHQSLH.

This sequence belongs to the krueppel C2H2-type zinc-finger protein family. As to expression, widely expressed with highest levels in testis.

It localises to the nucleus. In terms of biological role, may be involved in transcriptional regulation. This chain is Zinc finger protein 213 (ZNF213), found in Homo sapiens (Human).